Reading from the N-terminus, the 229-residue chain is Phosphoglycolate phosphatase (229 aa).

Asp-18 functions as the Nucleophile in the catalytic mechanism. The Mg(2+) site is built by Asp-18, Asp-20, and Asp-176.

This sequence belongs to the HAD-like hydrolase superfamily. CbbY/CbbZ/Gph/YieH family. Requires Mg(2+) as cofactor.

The catalysed reaction is 2-phosphoglycolate + H2O = glycolate + phosphate. It participates in organic acid metabolism; glycolate biosynthesis; glycolate from 2-phosphoglycolate: step 1/1. Specifically catalyzes the dephosphorylation of 2-phosphoglycolate. Is involved in the dissimilation of the intracellular 2-phosphoglycolate formed during the DNA repair of 3'-phosphoglycolate ends, a major class of DNA lesions induced by oxidative stress. The protein is Phosphoglycolate phosphatase of Xylella fastidiosa (strain 9a5c).